Consider the following 414-residue polypeptide: Histidine--tRNA ligase (414 aa).

Belongs to the class-II aminoacyl-tRNA synthetase family. In terms of assembly, homodimer.

Its subcellular location is the cytoplasm. The enzyme catalyses tRNA(His) + L-histidine + ATP = L-histidyl-tRNA(His) + AMP + diphosphate + H(+). The polypeptide is Histidine--tRNA ligase (Mycoplasma capricolum subsp. capricolum (strain California kid / ATCC 27343 / NCTC 10154)).